Here is a 977-residue protein sequence, read N- to C-terminus: Synaptonemal complex protein 2-like (977 aa).

Disordered regions lie at residues 447-474 (LGSQTSEHSSTTKTSSANRSVQKSLSNA), 574-593 (QSTERATPASRYRASMNSPL), 642-728 (RNKS…QDIM), and 804-824 (TEKNVNRSAADSEDSEDVFYS). The segment covering 449–462 (SQTSEHSSTTKTSS) has biased composition (low complexity). Over residues 463-474 (ANRSVQKSLSNA) the composition is skewed to polar residues. Positions 674-693 (SRKEMHRPEDINPKSPHSAE) are enriched in basic and acidic residues.

Belongs to the SYCP2 family. In terms of processing, ubiquitinated and gradually degraded by the proteasome during oocyte maturation. Post-translationally, phosphorylated in maturing oocytes, before its degradation. As to expression, expressed in immature oocytes (at protein level). Expressed in the ovary.

It localises to the nucleus. Its subcellular location is the chromosome. The protein resides in the centromere. It is found in the nucleolus. Functionally, oocyte-specific protein that localizes to centromeres at the dictyate stage and regulates the survival of primordial oocytes. The sequence is that of Synaptonemal complex protein 2-like (sycp2l) from Xenopus laevis (African clawed frog).